The following is a 119-amino-acid chain: Large ribosomal subunit protein uL18 (119 aa).

Belongs to the universal ribosomal protein uL18 family. Part of the 50S ribosomal subunit; part of the 5S rRNA/L5/L18/L25 subcomplex. Contacts the 5S and 23S rRNAs.

Functionally, this is one of the proteins that bind and probably mediate the attachment of the 5S RNA into the large ribosomal subunit, where it forms part of the central protuberance. In Nitratidesulfovibrio vulgaris (strain DSM 19637 / Miyazaki F) (Desulfovibrio vulgaris), this protein is Large ribosomal subunit protein uL18.